The following is a 79-amino-acid chain: Acyl carrier protein 2 (79 aa).

A Carrier domain is found at 2–77 (DDIETRVRKL…QAIDYLEEAV (76 aa)). Ser37 carries the O-(pantetheine 4'-phosphoryl)serine modification.

The protein belongs to the acyl carrier protein (ACP) family. In terms of processing, 4'-phosphopantetheine is transferred from CoA to a specific serine of apo-ACP by AcpS. This modification is essential for activity because fatty acids are bound in thioester linkage to the sulfhydryl of the prosthetic group.

Its subcellular location is the cytoplasm. Its pathway is lipid metabolism; fatty acid biosynthesis. Functionally, carrier of the growing fatty acid chain in fatty acid biosynthesis. In Pseudomonas aeruginosa (strain ATCC 15692 / DSM 22644 / CIP 104116 / JCM 14847 / LMG 12228 / 1C / PRS 101 / PAO1), this protein is Acyl carrier protein 2.